The following is a 997-amino-acid chain: DNA polymerase I (997 aa).

A 5'-3' exonuclease domain is found at Val174–Ser261. Residues Val428–Glu589 enclose the 3'-5' exonuclease domain.

This sequence belongs to the DNA polymerase type-A family.

The enzyme catalyses DNA(n) + a 2'-deoxyribonucleoside 5'-triphosphate = DNA(n+1) + diphosphate. Its function is as follows. In addition to polymerase activity, this DNA polymerase exhibits 3'-5' and 5'-3' exonuclease activity. In Treponema pallidum (strain Nichols), this protein is DNA polymerase I (polA).